The following is a 445-amino-acid chain: UPF0210 protein llmg_1581 (445 aa).

This sequence belongs to the UPF0210 family. In terms of assembly, homodimer.

This chain is UPF0210 protein llmg_1581, found in Lactococcus lactis subsp. cremoris (strain MG1363).